The chain runs to 481 residues: GTPase Der (481 aa).

EngA-type G domains are found at residues 3 to 166 and 194 to 367; these read PVVA…ESDF and IKLA…MSAT. GTP-binding positions include 9–16, 56–60, 118–121, 200–207, 247–251, and 312–315; these read GRPNVGKS, DTGGI, NKVD, GKPNVGKS, DTAGV, and NKWD. Residues 368-452 enclose the KH-like domain; the sequence is KRINTALLTQ…PIKIEFREGN (85 aa).

Belongs to the TRAFAC class TrmE-Era-EngA-EngB-Septin-like GTPase superfamily. EngA (Der) GTPase family. As to quaternary structure, associates with the 50S ribosomal subunit.

GTPase that plays an essential role in the late steps of ribosome biogenesis. This is GTPase Der from Alteromonas mediterranea (strain DSM 17117 / CIP 110805 / LMG 28347 / Deep ecotype).